The sequence spans 350 residues: Fe-S cluster assembly protein dre2 (350 aa).

The interval threonine 23–valine 156 is N-terminal SAM-like domain. Positions proline 157–methionine 242 are linker. Positions asparagine 165–proline 209 are disordered. Over residues lysine 190–valine 208 the composition is skewed to basic and acidic residues. 4 residues coordinate [2Fe-2S] cluster: cysteine 252, cysteine 263, cysteine 266, and cysteine 268. The tract at residues cysteine 252 to cysteine 268 is fe-S binding site A. [4Fe-4S] cluster is bound by residues cysteine 313, cysteine 316, cysteine 324, and cysteine 327. Short sequence motifs (cx2C motif) lie at residues cysteine 313–cysteine 316 and cysteine 324–cysteine 327. The segment at cysteine 313–cysteine 327 is fe-S binding site B.

Belongs to the anamorsin family. In terms of assembly, monomer. Interacts with TAH18. Interacts with MIA40. Requires [2Fe-2S] cluster as cofactor. [4Fe-4S] cluster is required as a cofactor.

It is found in the cytoplasm. The protein localises to the mitochondrion intermembrane space. Its function is as follows. Component of the cytosolic iron-sulfur (Fe-S) protein assembly (CIA) machinery required for the maturation of extramitochondrial Fe-S proteins. Part of an electron transfer chain functioning in an early step of cytosolic Fe-S biogenesis, facilitating the de novo assembly of a [4Fe-4S] cluster on the scaffold complex CFD1-NBP35. Electrons are transferred to DRE2 from NADPH via the FAD- and FMN-containing protein TAH18. TAH18-DRE2 are also required for the assembly of the diferric tyrosyl radical cofactor of ribonucleotide reductase (RNR), probably by providing electrons for reduction during radical cofactor maturation in the catalytic small subunit RNR2. The sequence is that of Fe-S cluster assembly protein dre2 from Sclerotinia sclerotiorum (strain ATCC 18683 / 1980 / Ss-1) (White mold).